Here is a 323-residue protein sequence, read N- to C-terminus: Protoheme IX farnesyltransferase (323 aa).

Transmembrane regions (helical) follow at residues 28–48 (IIPL…NGQV), 50–70 (PVLL…AQTL), 99–119 (HALI…VVFV), 122–142 (ASAL…THML), 150–170 (IVIG…AVTG), 178–198 (ALFA…ALMI), 223–243 (IWIY…PLAA), 244–264 (SGIV…YKTW), and 279–299 (LFKY…VDSL).

The protein belongs to the UbiA prenyltransferase family. Protoheme IX farnesyltransferase subfamily.

The protein localises to the cell inner membrane. The catalysed reaction is heme b + (2E,6E)-farnesyl diphosphate + H2O = Fe(II)-heme o + diphosphate. Its pathway is porphyrin-containing compound metabolism; heme O biosynthesis; heme O from protoheme: step 1/1. Its function is as follows. Converts heme B (protoheme IX) to heme O by substitution of the vinyl group on carbon 2 of heme B porphyrin ring with a hydroxyethyl farnesyl side group. The chain is Protoheme IX farnesyltransferase from Gloeothece citriformis (strain PCC 7424) (Cyanothece sp. (strain PCC 7424)).